The primary structure comprises 47 residues: Potassium channel toxin gamma-KTx 5.1 (47 aa).

4 disulfides stabilise this stretch: Cys-5–Cys-23, Cys-11–Cys-34, Cys-20–Cys-39, and Cys-24–Cys-41.

The protein belongs to the ergtoxin family. Gamma-KTx 5 subfamily. As to expression, expressed by the venom gland.

The protein resides in the secreted. Its function is as follows. Reversibly blocks Kv11/ERG potassium channels. This Centruroides sculpturatus (Arizona bark scorpion) protein is Potassium channel toxin gamma-KTx 5.1.